The following is a 128-amino-acid chain: Ribonuclease P protein component (128 aa).

The protein belongs to the RnpA family. As to quaternary structure, consists of a catalytic RNA component (M1 or rnpB) and a protein subunit.

It catalyses the reaction Endonucleolytic cleavage of RNA, removing 5'-extranucleotides from tRNA precursor.. RNaseP catalyzes the removal of the 5'-leader sequence from pre-tRNA to produce the mature 5'-terminus. It can also cleave other RNA substrates such as 4.5S RNA. The protein component plays an auxiliary but essential role in vivo by binding to the 5'-leader sequence and broadening the substrate specificity of the ribozyme. The chain is Ribonuclease P protein component from Rhizobium meliloti (strain 1021) (Ensifer meliloti).